A 273-amino-acid chain; its full sequence is Large ribosomal subunit protein uL2 (273 aa).

The tract at residues 221–273 is disordered; sequence RGTAMNPVDHPHGGGEGRNFGKHPVTPWGIQTKGKKTRSNKRTDKFIVRRRSK.

The protein belongs to the universal ribosomal protein uL2 family. In terms of assembly, part of the 50S ribosomal subunit. Forms a bridge to the 30S subunit in the 70S ribosome.

Its function is as follows. One of the primary rRNA binding proteins. Required for association of the 30S and 50S subunits to form the 70S ribosome, for tRNA binding and peptide bond formation. It has been suggested to have peptidyltransferase activity; this is somewhat controversial. Makes several contacts with the 16S rRNA in the 70S ribosome. The chain is Large ribosomal subunit protein uL2 from Sodalis glossinidius (strain morsitans).